We begin with the raw amino-acid sequence, 269 residues long: Zinc transporter ZupT (269 aa).

A run of 8 helical transmembrane segments spans residues 11-31 (IALAVTLAAGLATAIGSLLVL), 40-60 (LLAFGLAFAGGAMVYVSLSEI), 80-100 (YGTLAFLLGVIVIVLIDHFIP), 125-145 (ALLTSIAITAHNFPEGLATFF), 158-178 (AFAIAIHNIPEGIAIAVPVYF), 187-207 (FSASLLSGLAEPVGAALGYWL), 217-237 (FGWVFGLIAGVMVFLALDELL), and 249-269 (TVYGLVAGMGTLAISLVLFKW). Residues asparagine 136 and glutamate 139 each coordinate Fe(2+). Glutamate 139 and histidine 164 together coordinate Zn(2+). Positions 165, 168, and 197 each coordinate Fe(2+). Residue glutamate 168 participates in Zn(2+) binding.

This sequence belongs to the ZIP transporter (TC 2.A.5) family. ZupT subfamily.

Its subcellular location is the cell inner membrane. It catalyses the reaction Zn(2+)(in) = Zn(2+)(out). Mediates zinc uptake. May also transport other divalent cations. In Stenotrophomonas maltophilia (strain R551-3), this protein is Zinc transporter ZupT.